The chain runs to 79 residues: MKTLLIVLIKGYRNFISPLFPPSCRFQPTCSKYALEAVERFGVLHGGSLAIKRILRCHPFHPGGYDPVPLVDSSSKRSQ.

Belongs to the UPF0161 family.

The protein localises to the cell inner membrane. Its function is as follows. Could be involved in insertion of integral membrane proteins into the membrane. The protein is Putative membrane protein insertion efficiency factor of Rippkaea orientalis (strain PCC 8801 / RF-1) (Cyanothece sp. (strain PCC 8801)).